The primary structure comprises 610 residues: Glutamine--fructose-6-phosphate aminotransferase [isomerizing] (610 aa).

Cys-2 (nucleophile; for GATase activity) is an active-site residue. In terms of domain architecture, Glutamine amidotransferase type-2 spans 2–218; it reads CGIVGAVAQR…EGDVAEITRR (217 aa). 2 consecutive SIS domains span residues 286–426 and 459–600; these read AAEI…QQGR and LATD…VDQP. Lys-605 (for Fru-6P isomerization activity) is an active-site residue.

As to quaternary structure, homodimer.

The protein localises to the cytoplasm. The enzyme catalyses D-fructose 6-phosphate + L-glutamine = D-glucosamine 6-phosphate + L-glutamate. Functionally, catalyzes the first step in hexosamine metabolism, converting fructose-6P into glucosamine-6P using glutamine as a nitrogen source. The polypeptide is Glutamine--fructose-6-phosphate aminotransferase [isomerizing] (Vibrio vulnificus (strain CMCP6)).